A 179-amino-acid chain; its full sequence is Inner membrane-spanning protein YciB (179 aa).

Helical transmembrane passes span 22–42 (IYAA…YSWV), 50–70 (MALI…FFHN), 76–96 (WKVT…QWVM), 121–141 (LAWA…AFWL), and 149–169 (FKVF…GIYI).

Belongs to the YciB family.

Its subcellular location is the cell inner membrane. Its function is as follows. Plays a role in cell envelope biogenesis, maintenance of cell envelope integrity and membrane homeostasis. The sequence is that of Inner membrane-spanning protein YciB from Shigella dysenteriae serotype 1 (strain Sd197).